A 210-amino-acid chain; its full sequence is Cell division protein SepF (210 aa).

Positions Gly-13–Pro-101 are disordered. Composition is skewed to basic and acidic residues over residues Glu-22 to Glu-70 and Val-83 to Pro-93.

Belongs to the SepF family. Homodimer. Interacts with FtsZ.

It localises to the cytoplasm. In terms of biological role, cell division protein that is part of the divisome complex and is recruited early to the Z-ring. Probably stimulates Z-ring formation, perhaps through the cross-linking of FtsZ protofilaments. Its function overlaps with FtsA. In Micrococcus luteus (strain ATCC 4698 / DSM 20030 / JCM 1464 / CCM 169 / CCUG 5858 / IAM 1056 / NBRC 3333 / NCIMB 9278 / NCTC 2665 / VKM Ac-2230) (Micrococcus lysodeikticus), this protein is Cell division protein SepF.